The following is a 426-amino-acid chain: Enolase (426 aa).

Position 163 (Gln-163) interacts with (2R)-2-phosphoglycerate. Catalysis depends on Glu-205, which acts as the Proton donor. Positions 242, 283, and 310 each coordinate Mg(2+). (2R)-2-phosphoglycerate is bound by residues Lys-335, Arg-364, Ser-365, and Lys-386. Catalysis depends on Lys-335, which acts as the Proton acceptor.

Belongs to the enolase family. The cofactor is Mg(2+).

Its subcellular location is the cytoplasm. The protein localises to the secreted. The protein resides in the cell surface. The enzyme catalyses (2R)-2-phosphoglycerate = phosphoenolpyruvate + H2O. It functions in the pathway carbohydrate degradation; glycolysis; pyruvate from D-glyceraldehyde 3-phosphate: step 4/5. Catalyzes the reversible conversion of 2-phosphoglycerate (2-PG) into phosphoenolpyruvate (PEP). It is essential for the degradation of carbohydrates via glycolysis. This Clavibacter michiganensis subsp. michiganensis (strain NCPPB 382) protein is Enolase.